Here is a 213-residue protein sequence, read N- to C-terminus: MAAATASAAATPAKKAAPKKPAAAPEHPSYKEMLTKAITELKERNGSSRQAIKKFIQSNFKVKDNFDVQFNQALRRGVEKGEFVQPKGPSGTVKLAKKEKAAAAPKKPAAKKAAAPKKDAAPKKAAAPKKAAAPKSAAAKKKLLDAKKAAAKKPAAKKAAAPKKVAAPVEKPAPVKTTTTKSGRVTKASTTSKPAPKKKAAAPKKAATPAKSS.

Positions 1–25 (MAAATASAAATPAKKAAPKKPAAAP) are enriched in low complexity. Disordered stretches follow at residues 1–30 (MAAA…HPSY) and 81–213 (GEFV…AKSS). Residues 26 to 97 (EHPSYKEMLT…GPSGTVKLAK (72 aa)) enclose the H15 domain. Composition is skewed to low complexity over residues 102–113 (AAAPKKPAAKKA), 123–137 (KKAA…PKSA), 157–176 (KKAA…APVK), and 203–213 (PKKAATPAKSS).

Belongs to the histone H1/H5 family.

The protein resides in the nucleus. It is found in the chromosome. In terms of biological role, could act as an H1-type linker histone. The chain is Histone H1 from Ascobolus immersus.